Consider the following 134-residue polypeptide: Interleukin-5 (134 aa).

The signal sequence occupies residues 1–19 (MRMLLHLSLLALGAAYVYA). Threonine 22 carries O-linked (GalNAc...) threonine glycosylation. N-linked (GlcNAc...) asparagine glycans are attached at residues asparagine 47 and asparagine 90.

Belongs to the IL-5 family. Homodimer; disulfide-linked. Interacts with IL5RA. Interacts with CSF2RB.

Its subcellular location is the secreted. Functionally, homodimeric cytokine expressed predominantly by T-lymphocytes and NK cells that plays an important role in the survival, differentiation, and chemotaxis of eosinophils. Also acts on activated and resting B-cells to induce immunoglobulin production, growth, and differentiation. Mechanistically, exerts its biological effects through a receptor composed of IL5RA subunit and the cytokine receptor common subunit beta/CSF2RB. Binding to the receptor leads to activation of various kinases including LYN, SYK and JAK2 and thereby propagates signals through the RAS-MAPK and JAK-STAT5 pathways respectively. In Macaca mulatta (Rhesus macaque), this protein is Interleukin-5 (IL5).